A 163-amino-acid chain; its full sequence is Shikimate kinase (163 aa).

ATP is bound at residue 10 to 15 (GVGKTT). Thr-14 is a Mg(2+) binding site. 3 residues coordinate substrate: Asp-28, Arg-52, and Gly-75. An ATP-binding site is contributed by Arg-116. Arg-134 is a binding site for substrate. Position 151 (Arg-151) interacts with ATP.

Belongs to the shikimate kinase family. As to quaternary structure, monomer. Requires Mg(2+) as cofactor.

The protein resides in the cytoplasm. The catalysed reaction is shikimate + ATP = 3-phosphoshikimate + ADP + H(+). Its pathway is metabolic intermediate biosynthesis; chorismate biosynthesis; chorismate from D-erythrose 4-phosphate and phosphoenolpyruvate: step 5/7. Functionally, catalyzes the specific phosphorylation of the 3-hydroxyl group of shikimic acid using ATP as a cosubstrate. The chain is Shikimate kinase from Streptococcus pyogenes serotype M49 (strain NZ131).